A 157-amino-acid polypeptide reads, in one-letter code: MAARLRPLLALLALAALCPQETLAQPLPTTDTWKSEGQVVDSYEASAQLCWADYREHMDLLEKDWCNWTVISRPYSALRDCLEVEAEVFSLGFPNPLAERVIFETHQLHFSNCSLEQPTLCDPPEDVLLAMIIAPICLIPFFVTLVVWRSKGTELKT.

A signal peptide spans 1 to 24; sequence MAARLRPLLALLALAALCPQETLA. Over 25 to 125 the chain is Extracellular; it reads QPLPTTDTWK…EQPTLCDPPE (101 aa). 2 cysteine pairs are disulfide-bonded: Cys50–Cys81 and Cys66–Cys113. Asn67 and Asn112 each carry an N-linked (GlcNAc...) asparagine glycan. The chain crosses the membrane as a helical span at residues 126–147; sequence DVLLAMIIAPICLIPFFVTLVV. Topologically, residues 148–157 are cytoplasmic; that stretch reads WRSKGTELKT.

The protein belongs to the RAMP family. Heterodimer of CALCRL and RAMP2; the interaction forms the receptor complex for adrenomedullin/ADM. Heterodimer of CALCR and RAMP2; interaction forms the AMYR2 receptor complex for calcitonin/CALC and amylin/IAPP.

The protein localises to the cell membrane. Functionally, accessory protein that interacts with and modulates the function of G-protein coupled receptors including calcitonin gene-related peptide type 1 receptor (CALCRL) and calcitonin receptor (CALCR). Required for the transport of CALCRL to the plasma membrane. Together with CALCRL, form a receptor complex for adrenomedullin/ADM. Together with CALCR, act as a receptor complex for calcitonin/CT/CALC. Together with CALCR, also act as a receptor complex for amylin/IAPP. The sequence is that of Receptor activity-modifying protein 2 (RAMP2) from Cavia porcellus (Guinea pig).